Here is a 128-residue protein sequence, read N- to C-terminus: Small ribosomal subunit protein uS11 (128 aa).

It belongs to the universal ribosomal protein uS11 family. In terms of assembly, part of the 30S ribosomal subunit. Interacts with proteins S7 and S18. Binds to IF-3.

Located on the platform of the 30S subunit, it bridges several disparate RNA helices of the 16S rRNA. Forms part of the Shine-Dalgarno cleft in the 70S ribosome. The chain is Small ribosomal subunit protein uS11 from Wolbachia sp. subsp. Drosophila simulans (strain wRi).